We begin with the raw amino-acid sequence, 756 residues long: Probable chemoreceptor y4sI (756 aa).

Transmembrane regions (helical) follow at residues 26–46 (VCVA…TSVA) and 330–350 (LIKI…MAIL). HAMP domains are found at residues 353 to 406 (RSIS…ARVA) and 434 to 486 (DEQA…ETIR). Residues 491–720 (QAASMSSIVS…ESDAACRSLN (230 aa)) form the Methyl-accepting transducer domain. Residues 736 to 756 (GGGSSTRQPQSPPTQRYFMSR) form a disordered region.

Belongs to the methyl-accepting chemotaxis (MCP) protein family.

Its subcellular location is the cell membrane. Its function is as follows. Chemotactic-signal transducers respond to changes in the concentration of attractants and repellents in the environment, transduce a signal from the outside to the inside of the cell, and facilitate sensory adaptation through the variation of the level of methylation. Attractants increase the level of methylation while repellents decrease the level of methylation. The protein is Probable chemoreceptor y4sI of Sinorhizobium fredii (strain NBRC 101917 / NGR234).